The sequence spans 246 residues: tRNA pseudouridine synthase B (246 aa).

The Nucleophile role is filled by Asp-44.

Belongs to the pseudouridine synthase TruB family. Type 1 subfamily.

It carries out the reaction uridine(55) in tRNA = pseudouridine(55) in tRNA. Its function is as follows. Responsible for synthesis of pseudouridine from uracil-55 in the psi GC loop of transfer RNAs. The chain is tRNA pseudouridine synthase B from Desulfotalea psychrophila (strain LSv54 / DSM 12343).